A 401-amino-acid chain; its full sequence is L-rhamnonate dehydratase (401 aa).

The substrate site is built by His29 and Arg55. The Mg(2+) site is built by Asp222, Glu248, and Glu276. The Proton acceptor role is filled by His325. Glu345 is a binding site for substrate.

The protein belongs to the mandelate racemase/muconate lactonizing enzyme family. RhamD subfamily. Homooctamer; tetramer of dimers. The cofactor is Mg(2+).

The catalysed reaction is L-rhamnonate = 2-dehydro-3-deoxy-L-rhamnonate + H2O. Functionally, catalyzes the dehydration of L-rhamnonate to 2-keto-3-deoxy-L-rhamnonate (KDR). In Klebsiella pneumoniae subsp. pneumoniae (strain ATCC 700721 / MGH 78578), this protein is L-rhamnonate dehydratase.